A 196-amino-acid polypeptide reads, in one-letter code: Large ribosomal subunit protein eL15 (196 aa).

The disordered stretch occupies residues 153–196 (DPSSRGRATRGKTSAGRKGRGMATRGKGTEKTRPSIRAYKSRGK). Residues 159 to 172 (RATRGKTSAGRKGR) are compositionally biased toward basic residues.

Belongs to the eukaryotic ribosomal protein eL15 family.

The sequence is that of Large ribosomal subunit protein eL15 from Methanosarcina acetivorans (strain ATCC 35395 / DSM 2834 / JCM 12185 / C2A).